A 72-amino-acid chain; its full sequence is Translation initiation factor IF-1 2 (72 aa).

The S1-like domain occupies 1–72 (MAKEDTIQMQ…SRARIVFRAK (72 aa)).

It belongs to the IF-1 family. In terms of assembly, component of the 30S ribosomal translation pre-initiation complex which assembles on the 30S ribosome in the order IF-2 and IF-3, IF-1 and N-formylmethionyl-tRNA(fMet); mRNA recruitment can occur at any time during PIC assembly.

The protein localises to the cytoplasm. Functionally, one of the essential components for the initiation of protein synthesis. Stabilizes the binding of IF-2 and IF-3 on the 30S subunit to which N-formylmethionyl-tRNA(fMet) subsequently binds. Helps modulate mRNA selection, yielding the 30S pre-initiation complex (PIC). Upon addition of the 50S ribosomal subunit IF-1, IF-2 and IF-3 are released leaving the mature 70S translation initiation complex. This is Translation initiation factor IF-1 2 from Chromobacterium violaceum (strain ATCC 12472 / DSM 30191 / JCM 1249 / CCUG 213 / NBRC 12614 / NCIMB 9131 / NCTC 9757 / MK).